The primary structure comprises 120 residues: UPF0344 protein LMHCC_0278 (120 aa).

4 helical membrane-spanning segments follow: residues 3 to 23 (GYIH…ALLI), 33 to 53 (MLQM…IMMV), 62 to 82 (ILAI…EMLL), and 92 to 112 (GMFL…GFYL).

The protein belongs to the UPF0344 family.

It is found in the cell membrane. The protein is UPF0344 protein LMHCC_0278 of Listeria monocytogenes serotype 4a (strain HCC23).